Consider the following 306-residue polypeptide: Acetyl-coenzyme A carboxylase carboxyl transferase subunit beta (306 aa).

The region spanning 27 to 296 is the CoA carboxyltransferase N-terminal domain; sequence LWHKCPSCDA…PRFVAPVIEP (270 aa). The Zn(2+) site is built by Cys-31, Cys-34, Cys-50, and Cys-53. Residues 31-53 form a C4-type zinc finger; sequence CPSCDAVLYRPELEKTLDVCPKC.

The protein belongs to the AccD/PCCB family. As to quaternary structure, acetyl-CoA carboxylase is a heterohexamer composed of biotin carboxyl carrier protein (AccB), biotin carboxylase (AccC) and two subunits each of ACCase subunit alpha (AccA) and ACCase subunit beta (AccD). Requires Zn(2+) as cofactor.

The protein localises to the cytoplasm. The enzyme catalyses N(6)-carboxybiotinyl-L-lysyl-[protein] + acetyl-CoA = N(6)-biotinyl-L-lysyl-[protein] + malonyl-CoA. It participates in lipid metabolism; malonyl-CoA biosynthesis; malonyl-CoA from acetyl-CoA: step 1/1. Its function is as follows. Component of the acetyl coenzyme A carboxylase (ACC) complex. Biotin carboxylase (BC) catalyzes the carboxylation of biotin on its carrier protein (BCCP) and then the CO(2) group is transferred by the transcarboxylase to acetyl-CoA to form malonyl-CoA. This chain is Acetyl-coenzyme A carboxylase carboxyl transferase subunit beta, found in Pseudomonas syringae pv. tomato (strain ATCC BAA-871 / DC3000).